A 463-amino-acid polypeptide reads, in one-letter code: Dialkyldecalin synthase (463 aa).

Residues Val13, 32 to 33 (ER), Ile121, and Asp275 contribute to the FAD site.

Belongs to the PheA/TfdB FAD monooxygenase family. As to quaternary structure, homodimer. The cofactor is FAD.

It carries out the reaction 4-[(2E,7S,8E,10E,13R,14R,16E,18E)-14-ethyl-7,13-dihydroxy-2,16,18-trimethylicosa-2,8,10,16,18-pentaenoyl]-2-methylidene-5-oxo-2,5-dihydro-1H-pyrrol-3-olate = 4-[(1R,2R,4aS,5S,8aR)-2-[(2R,3R,5E,7E)-3-ethyl-2-hydroxy-5,7-dimethylnona-5,7-dien-1-yl]-5-hydroxy-1-methyl-1,2,4a,5,6,7,8,8a-octahydronaphthalene-1-carbonyl]-2-methylidene-5-oxo-2,5-dihydro-1H-pyrrol-3-olate. It participates in antibiotic biosynthesis. Functionally, involved in the biosynthesis of the spirotetramate antibiotics pyrroindomycins. Catalyzes the intramolecular cyclization forming the dialkyldecalin moiety in pyrroindomycins, via an endo-selective [4+2] cycloaddition reaction. In Streptomyces rugosporus, this protein is Dialkyldecalin synthase.